Here is a 300-residue protein sequence, read N- to C-terminus: tRNA pseudouridine synthase B (300 aa).

Asp-38 serves as the catalytic Nucleophile.

It belongs to the pseudouridine synthase TruB family. Type 1 subfamily.

It carries out the reaction uridine(55) in tRNA = pseudouridine(55) in tRNA. Responsible for synthesis of pseudouridine from uracil-55 in the psi GC loop of transfer RNAs. The protein is tRNA pseudouridine synthase B of Dehalococcoides mccartyi (strain ATCC BAA-2100 / JCM 16839 / KCTC 5957 / BAV1).